The primary structure comprises 463 residues: Thiamine-repressible acid phosphatase SPBC21H7.03c (463 aa).

An N-terminal signal peptide occupies residues 1-18 (MQLCIISLWFLAAFIVNA). Catalysis depends on His-69, which acts as the Nucleophile. N-linked (GlcNAc...) asparagine glycans are attached at residues Asn-98, Asn-104, Asn-221, and Asn-324. Asp-341 serves as the catalytic Proton donor. 2 N-linked (GlcNAc...) asparagine glycosylation sites follow: Asn-439 and Asn-458.

It belongs to the histidine acid phosphatase family.

It localises to the secreted. It is found in the cell wall. It carries out the reaction a phosphate monoester + H2O = an alcohol + phosphate. In terms of biological role, may dephosphorylate thiamine phosphates. The chain is Thiamine-repressible acid phosphatase SPBC21H7.03c from Schizosaccharomyces pombe (strain 972 / ATCC 24843) (Fission yeast).